The following is a 276-amino-acid chain: Hydroxyethylthiazole kinase (276 aa).

Substrate-binding residues include Met-53 and Ala-202.

It belongs to the Thz kinase family. Requires Mg(2+) as cofactor.

It catalyses the reaction 5-(2-hydroxyethyl)-4-methylthiazole + ATP = 4-methyl-5-(2-phosphooxyethyl)-thiazole + ADP + H(+). It functions in the pathway cofactor biosynthesis; thiamine diphosphate biosynthesis; 4-methyl-5-(2-phosphoethyl)-thiazole from 5-(2-hydroxyethyl)-4-methylthiazole: step 1/1. Functionally, thiazole kinase involved in thiamine salvage pathway. The polypeptide is Hydroxyethylthiazole kinase (THIM) (Arabidopsis thaliana (Mouse-ear cress)).